We begin with the raw amino-acid sequence, 81 residues long: Neuronatin (81 aa).

Belongs to the neuronatin family.

Its function is as follows. May participate in the maintenance of segment identity in the hindbrain and pituitary development, and maturation or maintenance of the overall structure of the nervous system. May function as a regulatory subunit of ion channels. The protein is Neuronatin (NNAT) of Sus scrofa (Pig).